The following is a 319-amino-acid chain: ATP-dependent 6-phosphofructokinase (319 aa).

Glycine 11 contacts ATP. ADP contacts are provided by residues 21 to 25 (RSVVR) and aspartate 59. Residues 72-73 (RC) and 102-105 (GDGS) contribute to the ATP site. Position 103 (aspartate 103) interacts with Mg(2+). Residue 125–127 (TID) coordinates substrate. The active-site Proton acceptor is the aspartate 127. Arginine 154 contributes to the ADP binding site. Substrate contacts are provided by residues arginine 162 and 169–171 (MGR). ADP-binding positions include 185–187 (GAE), arginine 211, and 213–215 (KKH). Residues glutamate 222, arginine 243, and 249-252 (HVQR) each bind substrate.

It belongs to the phosphofructokinase type A (PFKA) family. ATP-dependent PFK group I subfamily. Prokaryotic clade 'B1' sub-subfamily. In terms of assembly, homotetramer. Mg(2+) serves as cofactor.

It localises to the cytoplasm. It carries out the reaction beta-D-fructose 6-phosphate + ATP = beta-D-fructose 1,6-bisphosphate + ADP + H(+). The protein operates within carbohydrate degradation; glycolysis; D-glyceraldehyde 3-phosphate and glycerone phosphate from D-glucose: step 3/4. With respect to regulation, allosterically activated by ADP and other diphosphonucleosides, and allosterically inhibited by phosphoenolpyruvate. Its function is as follows. Catalyzes the phosphorylation of D-fructose 6-phosphate to fructose 1,6-bisphosphate by ATP, the first committing step of glycolysis. The polypeptide is ATP-dependent 6-phosphofructokinase (Geobacillus stearothermophilus (Bacillus stearothermophilus)).